A 556-amino-acid polypeptide reads, in one-letter code: Cytochrome P450 monooxygenase polC (556 aa).

Residues 17 to 37 (LCFAISLLCAVAIATFLHKLY) form a helical membrane-spanning segment. Cys479 is a heme binding site.

Belongs to the cytochrome P450 family. Requires heme as cofactor.

Its subcellular location is the membrane. It catalyses the reaction motiol + 3 reduced [NADPH--hemoprotein reductase] + 3 O2 = 4beta-carboxyl motiol + 3 oxidized [NADPH--hemoprotein reductase] + 4 H2O + 4 H(+). The protein operates within secondary metabolite biosynthesis; terpenoid biosynthesis. In terms of biological role, cytochrome P450 monooxygenase; part of the gene cluster that mediates the biosynthesis of antifungal fernane-type triterpenoid polytolypin. PolC uses motiol as a substrate and converts the methyl group at position C-4 to a carboxyl group. Within the pathway, the triterpene cyclase polA first catalyzes the cyclization of 2,3-oxidosqualene to motiol, polC converts the 4-alpha-methyl group of motiol to a carboxyl group, polB is responsible for appending a hydroxyl group at the 2-alpha position and polE is a dual functional P450, which can catalyze the formation of both the 1-beta-hydroxyl group and 10-beta-carboxyl group. The sequence is that of Cytochrome P450 monooxygenase polC from Polytolypa hystricis (strain UAMH7299).